We begin with the raw amino-acid sequence, 199 residues long: MFSGIIQEVARVDLIHHLRDSMEIGVFARKLIDVVPGSSFSVDGICLTLVKRQYELLFFDVTEETMAWTTIKDYTVGTMVNLERSVRLGDEIGGHFVSGHVCGIGTIIAIEKSYMFFKAPANLVPYILEKGFIAIDGISLTIARVKGDIFSVSLIPETRARTSLGYKQVGAHVNMEPDMMTKMQVDTIMRFHAEKEISK.

Lumazine-binding repeat units follow at residues 1–95 (MFSG…IGGH) and 96–188 (FVSG…VDTI). 2,4-dihydroxypteridine-binding positions include 4 to 6 (GII), 46 to 48 (CLT), 60 to 65 (DVTEET), 99 to 101 (GHV), lysine 130, 139 to 141 (SLT), and 153 to 158 (SLIPET).

In terms of assembly, homotrimer.

It catalyses the reaction 2 6,7-dimethyl-8-(1-D-ribityl)lumazine + H(+) = 5-amino-6-(D-ribitylamino)uracil + riboflavin. It participates in cofactor biosynthesis; riboflavin biosynthesis; riboflavin from 2-hydroxy-3-oxobutyl phosphate and 5-amino-6-(D-ribitylamino)uracil: step 2/2. Its function is as follows. Catalyzes the dismutation of two molecules of 6,7-dimethyl-8-ribityllumazine, resulting in the formation of riboflavin and 5-amino-6-(D-ribitylamino)uracil. The polypeptide is Riboflavin synthase (ribE) (Chlamydia trachomatis serovar D (strain ATCC VR-885 / DSM 19411 / UW-3/Cx)).